The chain runs to 134 residues: Large ribosomal subunit protein eL32 (134 aa).

Belongs to the eukaryotic ribosomal protein eL32 family.

The protein is Large ribosomal subunit protein eL32 (RpL32) of Drosophila bifasciata (Fruit fly).